Here is a 201-residue protein sequence, read N- to C-terminus: QRFPQRYIELAIVVDHGMYKKYNQNSDKIKVRVHQMVNHINEMYRPLNIAISLNRLQIWSKKDLITVKSASNVTLESFGNWRETVLLKQQNNDCAHLLTATNLNDNTIGLAYKKGMCNPKLSVGLVQDYSPNVFMVAVTMTHELGHNLGMEHDDKDKCKCEACIMSDVISDKPSKLFSDCSKNDYQTFLTKYNPQCILNAP.

At Gln1 the chain carries Pyrrolidone carboxylic acid. The 196-residue stretch at 6 to 201 folds into the Peptidase M12B domain; the sequence is RYIELAIVVD…YNPQCILNAP (196 aa). Asn72 carries an N-linked (GlcNAc...) asparagine glycan. 3 disulfides stabilise this stretch: Cys117/Cys196, Cys158/Cys180, and Cys160/Cys163. His142 is a Zn(2+) binding site. The active site involves Glu143. The Zn(2+) site is built by His146 and His152.

The protein belongs to the venom metalloproteinase (M12B) family. P-I subfamily. As to quaternary structure, monomer. Zn(2+) is required as a cofactor. Expressed by the venom gland.

It localises to the secreted. The enzyme catalyses Cleavage of 3-Asn-|-Gln-4, 10-His-|-Leu-11 and 14-Ala-|-Leu-15 in the insulin B chain, and the bond Z-Gly-Pro-|-Leu-Gly-Pro in a small molecule substrate of microbial collagenase.. Its function is as follows. Major venom non-hemorrhagic metalloproteinase. This Protobothrops flavoviridis (Habu) protein is Snake venom metalloproteinase trimerelysin-2.